Here is a 287-residue protein sequence, read N- to C-terminus: 3-beta-hydroxysteroid sulfotransferase (287 aa).

44 to 49 (KSGTNW) provides a ligand contact to 3'-phosphoadenylyl sulfate. The substrate site is built by tryptophan 72 and tryptophan 77. Histidine 99 (proton acceptor) is an active-site residue. Residues arginine 121, serine 129, tyrosine 184, 218–223 (SSFKFM), and 247–249 (RKG) contribute to the 3'-phosphoadenylyl sulfate site.

It belongs to the sulfotransferase 1 family. Homodimer. Liver, intestine and kidney.

The protein localises to the cytoplasm. It carries out the reaction an alcohol + 3'-phosphoadenylyl sulfate = an alkyl sulfate + adenosine 3',5'-bisphosphate + H(+). Its function is as follows. Sulfotransferase that utilizes 3'-phospho-5'-adenylyl sulfate (PAPS) as sulfonate donor to catalyze the sulfonation of 3-beta-hydroxyl groups of neutral steroids. High preference for C21 steroid (pregnenolone). This is 3-beta-hydroxysteroid sulfotransferase (STD2) from Cavia porcellus (Guinea pig).